Reading from the N-terminus, the 259-residue chain is Hydroxyethylthiazole kinase (259 aa).

Met-38 is a substrate binding site. Positions 113 and 158 each coordinate ATP. Gly-185 provides a ligand contact to substrate.

Belongs to the Thz kinase family. Requires Mg(2+) as cofactor.

The enzyme catalyses 5-(2-hydroxyethyl)-4-methylthiazole + ATP = 4-methyl-5-(2-phosphooxyethyl)-thiazole + ADP + H(+). Its pathway is cofactor biosynthesis; thiamine diphosphate biosynthesis; 4-methyl-5-(2-phosphoethyl)-thiazole from 5-(2-hydroxyethyl)-4-methylthiazole: step 1/1. Functionally, catalyzes the phosphorylation of the hydroxyl group of 4-methyl-5-beta-hydroxyethylthiazole (THZ). The sequence is that of Hydroxyethylthiazole kinase from Leuconostoc citreum (strain KM20).